The primary structure comprises 64 residues: Alpha-mammal toxin Lqh2 (64 aa).

The LCN-type CS-alpha/beta domain maps to 2 to 64; it reads KDGYIVDDVN…VRTKGPGRCR (63 aa). Cystine bridges form between Cys12/Cys63, Cys16/Cys36, Cys22/Cys46, and Cys26/Cys48. Arg64 is modified (arginine amide).

The protein belongs to the long (4 C-C) scorpion toxin superfamily. Sodium channel inhibitor family. Alpha subfamily. Expressed by the venom gland.

Its subcellular location is the secreted. Alpha toxins bind voltage-independently at site-3 of sodium channels (Nav) and inhibit the inactivation of the activated channels, thereby blocking neuronal transmission. The dissociation is voltage-dependent. Is active on mammals and competes for alpha-toxins binding on both mammalian and cockroach sodium channels. The polypeptide is Alpha-mammal toxin Lqh2 (Leiurus hebraeus (Hebrew deathstalker scorpion)).